Reading from the N-terminus, the 162-residue chain is MIRVATAECFTHGKVAREIHAFSMGYPLNYNWKISAELVLVAGLFIPTLSGVRNILGFEPPMPRATINDIKVYGEEEDEEVALMMARAVRELADSDIGIGTTAGIGRGGIAIASRDRWDVINSEVHADLRYPDTERILERQKSGIQRALQLLESFIVDFKDR.

Belongs to the UPF0254 family.

The protein is UPF0254 protein MTH1148 homolog of Methanothermobacter thermautotrophicus (strain Winter) (Methanobacterium thermoautotrophicum).